The sequence spans 331 residues: Adenosine deaminase (331 aa).

Residues H12 and H14 each coordinate Zn(2+). H14, D16, and G170 together coordinate substrate. Zn(2+) is bound at residue H197. The active-site Proton donor is E200. D278 lines the Zn(2+) pocket. Residue D279 coordinates substrate.

The protein belongs to the metallo-dependent hydrolases superfamily. Adenosine and AMP deaminases family. Adenosine deaminase subfamily. Zn(2+) serves as cofactor.

The enzyme catalyses adenosine + H2O + H(+) = inosine + NH4(+). The catalysed reaction is 2'-deoxyadenosine + H2O + H(+) = 2'-deoxyinosine + NH4(+). Its function is as follows. Catalyzes the hydrolytic deamination of adenosine and 2-deoxyadenosine. The protein is Adenosine deaminase of Shewanella sp. (strain ANA-3).